Consider the following 165-residue polypeptide: Cytochrome c-type biogenesis protein CcmE (165 aa).

Residues 1-7 (MTRKQRR) lie on the Cytoplasmic side of the membrane. Residues 8–28 (LMMIGGAGVVLVVAVGLVLNA) traverse the membrane as a helical; Signal-anchor for type II membrane protein segment. Over 29 to 165 (MRGSIVFFST…ASADAMRPAR (137 aa)) the chain is Periplasmic. Heme is bound by residues H122 and Y126. Over residues 138–149 (QGHWKDDYEKKP) the composition is skewed to basic and acidic residues. The disordered stretch occupies residues 138-165 (QGHWKDDYEKKPPGPGAAASADAMRPAR). Over residues 153–165 (GAAASADAMRPAR) the composition is skewed to low complexity.

It belongs to the CcmE/CycJ family.

Its subcellular location is the cell inner membrane. Heme chaperone required for the biogenesis of c-type cytochromes. Transiently binds heme delivered by CcmC and transfers the heme to apo-cytochromes in a process facilitated by CcmF and CcmH. This Rhodopseudomonas palustris (strain HaA2) protein is Cytochrome c-type biogenesis protein CcmE.